The chain runs to 363 residues: UDP-N-acetylglucosamine--N-acetylmuramyl-(pentapeptide) pyrophosphoryl-undecaprenol N-acetylglucosamine transferase (363 aa).

UDP-N-acetyl-alpha-D-glucosamine-binding positions include threonine 10–glycine 12, asparagine 124, serine 195, isoleucine 250, and glutamine 295.

This sequence belongs to the glycosyltransferase 28 family. MurG subfamily.

The protein resides in the cell membrane. It catalyses the reaction di-trans,octa-cis-undecaprenyl diphospho-N-acetyl-alpha-D-muramoyl-L-alanyl-D-glutamyl-meso-2,6-diaminopimeloyl-D-alanyl-D-alanine + UDP-N-acetyl-alpha-D-glucosamine = di-trans,octa-cis-undecaprenyl diphospho-[N-acetyl-alpha-D-glucosaminyl-(1-&gt;4)]-N-acetyl-alpha-D-muramoyl-L-alanyl-D-glutamyl-meso-2,6-diaminopimeloyl-D-alanyl-D-alanine + UDP + H(+). It functions in the pathway cell wall biogenesis; peptidoglycan biosynthesis. In terms of biological role, cell wall formation. Catalyzes the transfer of a GlcNAc subunit on undecaprenyl-pyrophosphoryl-MurNAc-pentapeptide (lipid intermediate I) to form undecaprenyl-pyrophosphoryl-MurNAc-(pentapeptide)GlcNAc (lipid intermediate II). The chain is UDP-N-acetylglucosamine--N-acetylmuramyl-(pentapeptide) pyrophosphoryl-undecaprenol N-acetylglucosamine transferase from Listeria monocytogenes serotype 4b (strain CLIP80459).